Reading from the N-terminus, the 303-residue chain is Mesenteric estrogen-dependent adipogenesis protein (303 aa).

Highly expressed in the visceral fat depot.

Its subcellular location is the cytoplasm. Involved in processes that promote adipocyte differentiation, lipid accumulation, and glucose uptake in mature adipocytes. This is Mesenteric estrogen-dependent adipogenesis protein (MEDAG) from Homo sapiens (Human).